The primary structure comprises 81 residues: Cytochrome b559 subunit alpha (81 aa).

A helical transmembrane segment spans residues 21 to 35 (VIHSVTIPSLFVGGW). Position 23 (His-23) interacts with heme.

It belongs to the PsbE/PsbF family. In terms of assembly, heterodimer of an alpha subunit and a beta subunit. PSII is composed of 1 copy each of membrane proteins PsbA, PsbB, PsbC, PsbD, PsbE, PsbF, PsbH, PsbI, PsbJ, PsbK, PsbL, PsbM, PsbT, PsbY, PsbZ, Psb30/Ycf12, at least 3 peripheral proteins of the oxygen-evolving complex and a large number of cofactors. It forms dimeric complexes. Requires heme b as cofactor.

The protein resides in the plastid. It is found in the chloroplast thylakoid membrane. Functionally, this b-type cytochrome is tightly associated with the reaction center of photosystem II (PSII). PSII is a light-driven water:plastoquinone oxidoreductase that uses light energy to abstract electrons from H(2)O, generating O(2) and a proton gradient subsequently used for ATP formation. It consists of a core antenna complex that captures photons, and an electron transfer chain that converts photonic excitation into a charge separation. The chain is Cytochrome b559 subunit alpha from Euglena gracilis.